A 362-amino-acid chain; its full sequence is Chorismate synthase (362 aa).

Positions 48 and 54 each coordinate NADP(+). Residues 131-133 (RSS), 243-244 (NA), Gly-287, 302-306 (KPTSS), and Arg-328 each bind FMN.

It belongs to the chorismate synthase family. In terms of assembly, homotetramer. FMNH2 is required as a cofactor.

It carries out the reaction 5-O-(1-carboxyvinyl)-3-phosphoshikimate = chorismate + phosphate. The protein operates within metabolic intermediate biosynthesis; chorismate biosynthesis; chorismate from D-erythrose 4-phosphate and phosphoenolpyruvate: step 7/7. Catalyzes the anti-1,4-elimination of the C-3 phosphate and the C-6 proR hydrogen from 5-enolpyruvylshikimate-3-phosphate (EPSP) to yield chorismate, which is the branch point compound that serves as the starting substrate for the three terminal pathways of aromatic amino acid biosynthesis. This reaction introduces a second double bond into the aromatic ring system. In Rhodopseudomonas palustris (strain BisB18), this protein is Chorismate synthase.